The primary structure comprises 292 residues: NAD kinase (292 aa).

D73 functions as the Proton acceptor in the catalytic mechanism. Residues 73 to 74, 147 to 148, H158, R175, D177, 188 to 193, and Q247 each bind NAD(+); these read DG, NE, and TAYSLS.

It belongs to the NAD kinase family. Requires a divalent metal cation as cofactor.

It is found in the cytoplasm. It carries out the reaction NAD(+) + ATP = ADP + NADP(+) + H(+). Functionally, involved in the regulation of the intracellular balance of NAD and NADP, and is a key enzyme in the biosynthesis of NADP. Catalyzes specifically the phosphorylation on 2'-hydroxyl of the adenosine moiety of NAD to yield NADP. The chain is NAD kinase from Shigella boydii serotype 4 (strain Sb227).